The following is a 365-amino-acid chain: tRNA 2-selenouridine synthase (365 aa).

Residues 12-136 (FLHDVPLLDV…LRMFLIDTTQ (125 aa)) form the Rhodanese domain. Residue Cys-95 is the S-selanylcysteine intermediate of the active site.

This sequence belongs to the SelU family. As to quaternary structure, monomer.

The catalysed reaction is 5-methylaminomethyl-2-thiouridine(34) in tRNA + selenophosphate + (2E)-geranyl diphosphate + H2O + H(+) = 5-methylaminomethyl-2-selenouridine(34) in tRNA + (2E)-thiogeraniol + phosphate + diphosphate. It catalyses the reaction 5-methylaminomethyl-2-thiouridine(34) in tRNA + (2E)-geranyl diphosphate = 5-methylaminomethyl-S-(2E)-geranyl-thiouridine(34) in tRNA + diphosphate. The enzyme catalyses 5-methylaminomethyl-S-(2E)-geranyl-thiouridine(34) in tRNA + selenophosphate + H(+) = 5-methylaminomethyl-2-(Se-phospho)selenouridine(34) in tRNA + (2E)-thiogeraniol. It carries out the reaction 5-methylaminomethyl-2-(Se-phospho)selenouridine(34) in tRNA + H2O = 5-methylaminomethyl-2-selenouridine(34) in tRNA + phosphate. In terms of biological role, involved in the post-transcriptional modification of the uridine at the wobble position (U34) of tRNA(Lys), tRNA(Glu) and tRNA(Gln). Catalyzes the conversion of 2-thiouridine (S2U-RNA) to 2-selenouridine (Se2U-RNA). Acts in a two-step process involving geranylation of 2-thiouridine (S2U) to S-geranyl-2-thiouridine (geS2U) and subsequent selenation of the latter derivative to 2-selenouridine (Se2U) in the tRNA chain. In Verminephrobacter eiseniae (strain EF01-2), this protein is tRNA 2-selenouridine synthase.